The primary structure comprises 285 residues: 4-diphosphocytidyl-2-C-methyl-D-erythritol kinase (285 aa).

The active site involves Lys-10. Residue 93 to 103 coordinates ATP; sequence PIGGGLGGGSS. The active site involves Asp-135.

This sequence belongs to the GHMP kinase family. IspE subfamily.

The catalysed reaction is 4-CDP-2-C-methyl-D-erythritol + ATP = 4-CDP-2-C-methyl-D-erythritol 2-phosphate + ADP + H(+). It functions in the pathway isoprenoid biosynthesis; isopentenyl diphosphate biosynthesis via DXP pathway; isopentenyl diphosphate from 1-deoxy-D-xylulose 5-phosphate: step 3/6. In terms of biological role, catalyzes the phosphorylation of the position 2 hydroxy group of 4-diphosphocytidyl-2C-methyl-D-erythritol. The chain is 4-diphosphocytidyl-2-C-methyl-D-erythritol kinase from Vesicomyosocius okutanii subsp. Calyptogena okutanii (strain HA).